The following is a 240-amino-acid chain: UDP-2,3-diacylglucosamine hydrolase (240 aa).

5 residues coordinate Mn(2+): D8, H10, D41, N79, and H114. Position 79–80 (79–80 (NR)) interacts with substrate. Residues D122, S160, N164, K167, and H195 each coordinate substrate. Mn(2+) is bound by residues H195 and H197.

The protein belongs to the LpxH family. Mn(2+) is required as a cofactor.

The protein localises to the cell inner membrane. It carries out the reaction UDP-2-N,3-O-bis[(3R)-3-hydroxytetradecanoyl]-alpha-D-glucosamine + H2O = 2-N,3-O-bis[(3R)-3-hydroxytetradecanoyl]-alpha-D-glucosaminyl 1-phosphate + UMP + 2 H(+). The protein operates within glycolipid biosynthesis; lipid IV(A) biosynthesis; lipid IV(A) from (3R)-3-hydroxytetradecanoyl-[acyl-carrier-protein] and UDP-N-acetyl-alpha-D-glucosamine: step 4/6. Functionally, hydrolyzes the pyrophosphate bond of UDP-2,3-diacylglucosamine to yield 2,3-diacylglucosamine 1-phosphate (lipid X) and UMP by catalyzing the attack of water at the alpha-P atom. Involved in the biosynthesis of lipid A, a phosphorylated glycolipid that anchors the lipopolysaccharide to the outer membrane of the cell. In Salmonella schwarzengrund (strain CVM19633), this protein is UDP-2,3-diacylglucosamine hydrolase.